A 388-amino-acid polypeptide reads, in one-letter code: S-adenosylmethionine synthase (388 aa).

ATP is bound at residue histidine 16. Aspartate 18 is a Mg(2+) binding site. Glutamate 44 is a binding site for K(+). Residues glutamate 57 and glutamine 100 each coordinate L-methionine. The segment at 100 to 110 (QSPEIAQGVDR) is flexible loop. ATP is bound by residues 165 to 167 (DAK), 231 to 232 (KF), aspartate 240, 246 to 247 (RK), alanine 263, and lysine 267. Aspartate 240 is a binding site for L-methionine. Lysine 271 contributes to the L-methionine binding site.

Belongs to the AdoMet synthase family. As to quaternary structure, homotetramer; dimer of dimers. Requires Mg(2+) as cofactor. K(+) is required as a cofactor.

Its subcellular location is the cytoplasm. It catalyses the reaction L-methionine + ATP + H2O = S-adenosyl-L-methionine + phosphate + diphosphate. It functions in the pathway amino-acid biosynthesis; S-adenosyl-L-methionine biosynthesis; S-adenosyl-L-methionine from L-methionine: step 1/1. Catalyzes the formation of S-adenosylmethionine (AdoMet) from methionine and ATP. The overall synthetic reaction is composed of two sequential steps, AdoMet formation and the subsequent tripolyphosphate hydrolysis which occurs prior to release of AdoMet from the enzyme. The protein is S-adenosylmethionine synthase of Psychrobacter arcticus (strain DSM 17307 / VKM B-2377 / 273-4).